The primary structure comprises 687 residues: SLCO1B3-SLCO1B7 readthrough transcript protein (687 aa).

Over 1 to 29 (MDQHQHLNKTAESASSEKKKTRRCNGFKM) the chain is Cytoplasmic. A helical membrane pass occupies residues 30 to 50 (FLAALSFSYIAKALGGIIMKI). Over 51–63 (SITQIERRFDISS) the chain is Extracellular. Residues 64–84 (SLAGLIDGSFEIGNLLVIVFV) traverse the membrane as a helical segment. Residues 85–96 (SYFGSKLHRPKL) lie on the Cytoplasmic side of the membrane. The helical transmembrane segment at 97-117 (IGIGCLLMGTGSILTSLPHFF) threads the bilayer. Residues 118–170 (MGYYRYSKETNIDPSENSTSNLPNCLINQMLSLNRTPSEIIERGCVKESGSHM) lie on the Extracellular side of the membrane. N-linked (GlcNAc...) asparagine glycans are attached at residues Asn134 and Asn151. Residues 171–191 (WIYVFMGNMLRGIGETPIVPL) traverse the membrane as a helical segment. Residues 192–206 (GISYIDDFAKEGHSS) are Cytoplasmic-facing. A helical transmembrane segment spans residues 207–227 (LYLGTVNVMGMTGLVFAFMLG). Residues 228–258 (SLFAKMYVDIGYVDLSTIRITPKDSRWVGAW) are Extracellular-facing. The helical transmembrane segment at 259-279 (WLGFLVSGIVSIISSIPFFFL) threads the bilayer. Residues 280-339 (PLNPNKPQKERKVSLFLHVLKTNDKRNQIANLTNRRKYITKNVTGFFQSLKSILTNPLYV) lie on the Cytoplasmic side of the membrane. A helical transmembrane segment spans residues 340-360 (IFVIFTLLHMSSYIASLTYII). Residues 361–376 (KMVEQQYGWSASKTNF) are Extracellular-facing. The chain crosses the membrane as a helical span at residues 377–397 (LLGVLALPAVAIGMFSGGYII). Topologically, residues 398 to 409 (KKFKLSLVGLAK) are cytoplasmic. Residues 410 to 430 (LAFCSATVHLLSQVLYFFLIC) traverse the membrane as a helical segment. Residues 431–539 (ESKSVAGLTL…CTRKSYVYFV (109 aa)) lie on the Extracellular side of the membrane. Residues 453–508 (DVPLSYCNSECNCDESQWEPVCGNNGITYLSPCLAGCKSSSGNKEPIVFYNCSCVE) enclose the Kazal-like domain. 3 disulfide bridges follow: Cys459-Cys489, Cys465-Cys485, and Cys474-Cys506. 2 N-linked (GlcNAc...) asparagine glycosylation sites follow: Asn503 and Asn516. A helical membrane pass occupies residues 540 to 560 (IQVLDAFLCAVGLTSYSVLVI). The Cytoplasmic portion of the chain corresponds to 561–568 (RIVQPELK). A helical membrane pass occupies residues 569–589 (ALAIGFHSMIMRSLGGILVPI). At 590-624 (YFGALIDTTCMKWSTNSCGARGACRIYNSTYLGRA) the chain is on the extracellular side. Asn617 carries an N-linked (GlcNAc...) asparagine glycan. Residues 625-645 (FFGLKVALIFPVLVLLTVFIF) traverse the membrane as a helical segment. The Cytoplasmic portion of the chain corresponds to 646–687 (VVRKKSHGKDTKVLENERQVMDEANLEFLNDSEHFVPSAEEQ).

It belongs to the organo anion transporter (TC 2.A.60) family. As to expression, expressed in the perivenular areas (centrilobular) of the liver (at protein level).

The protein resides in the smooth endoplasmic reticulum membrane. It localises to the cell membrane. The protein localises to the endoplasmic reticulum membrane. It catalyses the reaction 17beta-estradiol 17-O-(beta-D-glucuronate)(out) = 17beta-estradiol 17-O-(beta-D-glucuronate)(in). The catalysed reaction is dehydroepiandrosterone 3-sulfate(out) = dehydroepiandrosterone 3-sulfate(in). It carries out the reaction taurocholate(out) = taurocholate(in). The enzyme catalyses lithocholate(out) = lithocholate(in). Transport activity is induced by farnesoid X receptor (FXR) agonists such as chenodeoxycholate. Its function is as follows. Mediates the Na(+)-independent uptake of organic anions. Transports the conjugated steroids 17-beta-glucuronosyl estradiol (17beta-estradiol 17-O-(beta-D-glucuronate) or E2G) and dehydroepiandrosterone 3-sulfate (DHEAS) at the smooth endoplasmic reticulum membrane (SER), granting access to metabolizing enzymes. Contributes to the metabolism of bile acids such as taurocholate (cholyltaurine) and lithocholate, by functioning as a doorway between SER and cytosol, thereby decreasing their circulating levels and protecting the organism from their detergent properties. Regulates access or exit of drugs to the SER lumen. In Homo sapiens (Human), this protein is SLCO1B3-SLCO1B7 readthrough transcript protein.